A 207-amino-acid polypeptide reads, in one-letter code: Claudin-11 (207 aa).

Met1 is a topological domain (cytoplasmic). Residues Val2 to Ile22 traverse the membrane as a helical segment. The Extracellular portion of the chain corresponds to Val23–Arg82. Residues Ala83–Leu103 traverse the membrane as a helical segment. Topologically, residues Pro104–Leu122 are cytoplasmic. The chain crosses the membrane as a helical span at residues Ala123–Val143. The Extracellular portion of the chain corresponds to Cys144–Ser157. A helical transmembrane segment spans residues Leu158–Cys178. Over Ala179–Val207 the chain is Cytoplasmic. Phosphoserine is present on residues Ser193, Ser194, Ser197, and Ser198.

Belongs to the claudin family. As to quaternary structure, interacts with tetraspanin-3/TSPAN3. Interacts with OCLN.

Its subcellular location is the cell junction. The protein resides in the tight junction. It localises to the cell membrane. In terms of biological role, plays a major role in tight junction-specific obliteration of the intercellular space, through calcium-independent cell-adhesion activity. The chain is Claudin-11 (CLDN11) from Bos taurus (Bovine).